Here is a 344-residue protein sequence, read N- to C-terminus: tRNA N6-adenosine threonylcarbamoyltransferase (344 aa).

2 residues coordinate Fe cation: H113 and H117. Substrate contacts are provided by residues 135-139 (LVSGG), D169, G182, D186, and N278. D306 is a binding site for Fe cation.

Belongs to the KAE1 / TsaD family. Requires Fe(2+) as cofactor.

Its subcellular location is the cytoplasm. It catalyses the reaction L-threonylcarbamoyladenylate + adenosine(37) in tRNA = N(6)-L-threonylcarbamoyladenosine(37) in tRNA + AMP + H(+). In terms of biological role, required for the formation of a threonylcarbamoyl group on adenosine at position 37 (t(6)A37) in tRNAs that read codons beginning with adenine. Is involved in the transfer of the threonylcarbamoyl moiety of threonylcarbamoyl-AMP (TC-AMP) to the N6 group of A37, together with TsaE and TsaB. TsaD likely plays a direct catalytic role in this reaction. The protein is tRNA N6-adenosine threonylcarbamoyltransferase of Corynebacterium efficiens (strain DSM 44549 / YS-314 / AJ 12310 / JCM 11189 / NBRC 100395).